A 194-amino-acid chain; its full sequence is Protein cholesin (194 aa).

Positions 1–83 are disordered; sequence MAKQKRKVPE…RKKEERQRLR (83 aa). S23 and S59 each carry phosphoserine. Residues 61–83 show a composition bias toward basic and acidic residues; sequence EEQRVLERKLKKERKKEERQRLR. Phosphoserine is present on residues S97 and S175.

As to expression, secreted from the instestine, secretion is induced by feeding and cholesterol absorption.

Its subcellular location is the secreted. Its function is as follows. Hormone secreted from the intestine in response to cholesterol, where it acts to inhibit cholesterol synthesis in the liver and VLDL secretion,leading to a reduction in circulating cholesterol levels. Acts through binding to its receptor, GPR146. The protein is Protein cholesin of Homo sapiens (Human).